A 118-amino-acid chain; its full sequence is uncharacterized protein (118 aa).

Belongs to the transposase IS3/IS150/IS904 family.

This is an uncharacterized protein from Haemophilus influenzae (strain ATCC 51907 / DSM 11121 / KW20 / Rd).